The chain runs to 548 residues: Probable malate:quinone oxidoreductase (548 aa).

The interval D521–L548 is disordered. The segment covering P530 to K541 has biased composition (low complexity).

This sequence belongs to the MQO family. It depends on FAD as a cofactor.

The enzyme catalyses (S)-malate + a quinone = a quinol + oxaloacetate. It participates in carbohydrate metabolism; tricarboxylic acid cycle; oxaloacetate from (S)-malate (quinone route): step 1/1. The polypeptide is Probable malate:quinone oxidoreductase (Escherichia coli O139:H28 (strain E24377A / ETEC)).